A 363-amino-acid polypeptide reads, in one-letter code: MERVYNFSAGPAVLPVPVLEKVQRELLSYNGSGMSVMELSHRSELFQNILDDAESLIRELMEIPENYKVLFLQGGASLQFDMVPMNLANGKKAAYVNTGSWAKKAISEAKKIQGVEVEVIASSEDRNFSYIPEIPTVSSDAAYLHVTTNNTIEGTAMFDVPDSAVPVVADMSSNILSSVYDVKKFGLIYAGAQKNIGPAGLTLVIVREDLIGQVEGLPSMLDFKVQAENDSMYNTPPTFAIYVAKLVFEWIKEQGGVAGIEALNRKKAALLYNYIDQSDFFSSPVEPSARSLTNVPFVTNSAEFDKAFVQEAEANGFKNLKGHRSVGGMRASLYNAFPIEGVEALIAFMEKFANARKGGEVRV.

Residue Arg42 coordinates L-glutamate. Pyridoxal 5'-phosphate is bound by residues 76-77 (AS), Trp101, Thr151, Asp170, and Gln193. Lys194 carries the post-translational modification N6-(pyridoxal phosphate)lysine. Residue 234–235 (NT) coordinates pyridoxal 5'-phosphate.

It belongs to the class-V pyridoxal-phosphate-dependent aminotransferase family. SerC subfamily. As to quaternary structure, homodimer. Pyridoxal 5'-phosphate is required as a cofactor.

Its subcellular location is the cytoplasm. It catalyses the reaction O-phospho-L-serine + 2-oxoglutarate = 3-phosphooxypyruvate + L-glutamate. It carries out the reaction 4-(phosphooxy)-L-threonine + 2-oxoglutarate = (R)-3-hydroxy-2-oxo-4-phosphooxybutanoate + L-glutamate. The protein operates within amino-acid biosynthesis; L-serine biosynthesis; L-serine from 3-phospho-D-glycerate: step 2/3. Its function is as follows. Catalyzes the reversible conversion of 3-phosphohydroxypyruvate to phosphoserine and of 3-hydroxy-2-oxo-4-phosphonooxybutanoate to phosphohydroxythreonine. The sequence is that of Phosphoserine aminotransferase from Listeria monocytogenes serotype 4b (strain F2365).